Consider the following 245-residue polypeptide: MEKTELIQKAKLAEQAERYDDMATCMKAVTEQGAELSNEERNLLSVAYKNVVGGRRSAWRVISSIEQKTDTSDKKLQLIKDYREKVESELRSICTTVLELLDKYLIANATNPESKVFYLKMKGDYFRYLAEVACGDDRKQTIDNSQGAYQEAFDISKKEMQPTHPIRLGLALNFSVFYYEILNNPELACTLAKTAFDEAIAELDTLNEDSYKDSTLIMQLLRDNLTLWTSDSAGEECDAAEGAEN.

An N-acetylmethionine modification is found at Met1. Lys3 bears the N6-acetyllysine mark. The residue at position 49 (Lys49) is an N6-acetyllysine; alternate. Residue Lys49 forms a Glycyl lysine isopeptide (Lys-Gly) (interchain with G-Cter in SUMO2); alternate linkage. At Lys68 the chain carries N6-acetyllysine. A 3'-nitrotyrosine modification is found at Tyr82. Phosphoserine is present on Ser92. Tyr104 is modified (3'-nitrotyrosine). The residue at position 115 (Lys115) is an N6-acetyllysine. Phosphoserine; by CK1 is present on Ser232.

The protein belongs to the 14-3-3 family. As to quaternary structure, homodimer. Interacts with CDK16. Interacts with RGS7 (phosphorylated form). Interacts with SSH1. Interacts with CDKN1B ('Thr-198' phosphorylated form); the interaction translocates CDKN1B to the cytoplasm. Interacts with GAB2. Interacts with the 'Ser-241' phosphorylated form of PDPK1. Interacts with the 'Thr-369' phosphorylated form of DAPK2. Interacts with PI4KB, TBC1D22A and TBC1D22B. Interacts with SLITRK1. Interacts with RIPOR2. Interacts with INAVA; the interaction increases upon PRR (pattern recognition receptor) stimulation and is required for cellular signaling pathway activation and cytokine secretion. Interacts with MARK2, MARK3 and MARK4. Interacts with MEFV.

The protein localises to the cytoplasm. Its function is as follows. Adapter protein implicated in the regulation of a large spectrum of both general and specialized signaling pathways. Binds to a large number of partners, usually by recognition of a phosphoserine or phosphothreonine motif. Binding generally results in the modulation of the activity of the binding partner. Negatively regulates the kinase activity of PDPK1. The sequence is that of 14-3-3 protein theta (YWHAQ) from Bos taurus (Bovine).